Here is a 333-residue protein sequence, read N- to C-terminus: Glycerol-3-phosphate dehydrogenase [NAD(P)+] (333 aa).

3 residues coordinate NADPH: Ser10, Trp11, and Lys105. Residues Lys105, Gly136, and Thr138 each coordinate sn-glycerol 3-phosphate. Residue Ala140 coordinates NADPH. Residues Lys191, Asp244, Ser254, Arg255, and Asn256 each coordinate sn-glycerol 3-phosphate. Lys191 serves as the catalytic Proton acceptor. Arg255 contacts NADPH. Val279 and Glu281 together coordinate NADPH.

Belongs to the NAD-dependent glycerol-3-phosphate dehydrogenase family.

It localises to the cytoplasm. It carries out the reaction sn-glycerol 3-phosphate + NAD(+) = dihydroxyacetone phosphate + NADH + H(+). It catalyses the reaction sn-glycerol 3-phosphate + NADP(+) = dihydroxyacetone phosphate + NADPH + H(+). It participates in membrane lipid metabolism; glycerophospholipid metabolism. Catalyzes the reduction of the glycolytic intermediate dihydroxyacetone phosphate (DHAP) to sn-glycerol 3-phosphate (G3P), the key precursor for phospholipid synthesis. In Syntrophotalea carbinolica (strain DSM 2380 / NBRC 103641 / GraBd1) (Pelobacter carbinolicus), this protein is Glycerol-3-phosphate dehydrogenase [NAD(P)+].